The following is a 231-amino-acid chain: Small ribosomal subunit protein uS3 (231 aa).

The 69-residue stretch at 39–107 (IRKYIVENLP…DVKLNIVEIR (69 aa)) folds into the KH type-2 domain.

Belongs to the universal ribosomal protein uS3 family. Part of the 30S ribosomal subunit. Forms a tight complex with proteins S10 and S14.

Its function is as follows. Binds the lower part of the 30S subunit head. Binds mRNA in the 70S ribosome, positioning it for translation. This is Small ribosomal subunit protein uS3 from Novosphingobium aromaticivorans (strain ATCC 700278 / DSM 12444 / CCUG 56034 / CIP 105152 / NBRC 16084 / F199).